The chain runs to 204 residues: INSIG protein homolog (204 aa).

Transmembrane regions (helical) follow at residues 5–27, 47–64, 76–97, 101–118, and 124–145; these read ISEA…HSHV, FWFP…AELR, ARQA…ALVH, VVPV…TWCV, and GAAC…LVQL. His26 contributes to the a 1,2-diacyl-sn-glycerol binding site. Tyr150 provides a ligand contact to a 1,2-diacyl-sn-glycerol. A helical transmembrane segment spans residues 162-179; it reads PFLAPLYFAFGVVAALLG.

It belongs to the INSIG family. As to quaternary structure, homotrimer.

It is found in the membrane. Diacylglycerol-binding protein. This Mycolicibacterium vanbaalenii (strain DSM 7251 / JCM 13017 / BCRC 16820 / KCTC 9966 / NRRL B-24157 / PYR-1) (Mycobacterium vanbaalenii) protein is INSIG protein homolog.